The chain runs to 546 residues: Chaperonin GroEL 1 (546 aa).

ATP-binding positions include 30–33 (TLGP), lysine 51, 87–91 (DGTTT), glycine 415, 479–481 (NAA), and aspartate 495. The disordered stretch occupies residues 526 to 546 (KEDAPMPGGMPGGMGGMGMDM). Over residues 534 to 546 (GMPGGMGGMGMDM) the composition is skewed to gly residues.

It belongs to the chaperonin (HSP60) family. In terms of assembly, forms a cylinder of 14 subunits composed of two heptameric rings stacked back-to-back. Interacts with the co-chaperonin GroES.

The protein localises to the cytoplasm. The enzyme catalyses ATP + H2O + a folded polypeptide = ADP + phosphate + an unfolded polypeptide.. Together with its co-chaperonin GroES, plays an essential role in assisting protein folding. The GroEL-GroES system forms a nano-cage that allows encapsulation of the non-native substrate proteins and provides a physical environment optimized to promote and accelerate protein folding. The chain is Chaperonin GroEL 1 from Burkholderia cenocepacia (strain HI2424).